Here is a 253-residue protein sequence, read N- to C-terminus: Sporulation initiation inhibitor protein Soj (253 aa).

ATP-binding residues include Lys-11, Gly-12, Gly-13, Val-14, Gly-15, Lys-16, Thr-17, Thr-18, Pro-214, and Asn-216. Thr-17 provides a ligand contact to Mg(2+).

Belongs to the ParA family. In terms of assembly, dimerizes in the presence of ATP but not ADP; ATP-binding is required for double-stranded (ds)DNA-binding. Interacts with DnaA.

The protein resides in the cytoplasm. It catalyses the reaction ATP + H2O = ADP + phosphate + H(+). Acts as a spatially regulated molecular switch, capable of either inhibiting or activating the ability of DnaA to initiate DNA replication. Monomeric ADP-Soj inhibits oligomerization of DnaA on single-stranded (ss)- or double-stranded (ds)DNA, thus inhibiting DNA replication initiation; does not disassemble premade DnaA-DNA filaments. Decreases the residence time of DnaA on the chromosome at its binding sites (oriC, replication forks and (probably) promoter-binding sites). Soj forms nucleoprotein filaments in an ATP- and DNA-dependent manner. Inhibits the initiation of sporulation, Spo0J antagonizes this inhibition. Soj ultimately inhibits the activation (phosphorylation) of Spo0A. This Bacillus subtilis (strain 168) protein is Sporulation initiation inhibitor protein Soj.